The following is a 427-amino-acid chain: Cryptic catabolic NAD-specific glutamate dehydrogenase GudB (427 aa).

Residues Lys80 and Lys107 each coordinate substrate. Lys119 serves as the catalytic Proton donor. Thr203 and Asn234 together coordinate NAD(+). Substrate is bound at residue Ser361.

This sequence belongs to the Glu/Leu/Phe/Val dehydrogenases family. Homohexamer.

It carries out the reaction L-glutamate + NAD(+) + H2O = 2-oxoglutarate + NH4(+) + NADH + H(+). In terms of biological role, gudB seems to be intrinsically inactive, however spontaneous mutations removing a 9-bp direct repeat within the wild-type gudB sequence activated the GudB protein and allowed more-efficient utilization of amino acids of the glutamate family (called gutB1). This 3 amino acid insertion presumably causes severe destabilization of the fold of the protein, leading to an inactive enzyme that is very quickly degraded. The cryptic GudB serves as a buffer that may compensate for mutations in the rocG gene and that can also be decryptified for the utilization of glutamate as a single carbon source in the absence of arginine. It is unable to synthesize glutamate. The polypeptide is Cryptic catabolic NAD-specific glutamate dehydrogenase GudB (Bacillus subtilis (strain 168)).